Here is a 265-residue protein sequence, read N- to C-terminus: Phosphatidylglycerol--prolipoprotein diacylglyceryl transferase (265 aa).

4 consecutive transmembrane segments (helical) span residues 10 to 30 (VAIALGPLKVHWYGLMYLIGI), 56 to 76 (LVFWVALGVIAGGRLGYVLFY), 87 to 107 (LILQVWRGGMSFHGGLLGVLL), and 117 to 137 (GKGFFELMDFIAPLVPIGLGA). Arg139 provides a ligand contact to a 1,2-diacyl-sn-glycero-3-phospho-(1'-sn-glycerol). Helical transmembrane passes span 172-192 (PSQLYQFALEGVALFAILWFY), 200-220 (MAVSGLFALCYGIFRFIVEFV), and 227-247 (LGYLAFGWLTMGQLLCLPMIL).

Belongs to the Lgt family.

Its subcellular location is the cell inner membrane. It catalyses the reaction L-cysteinyl-[prolipoprotein] + a 1,2-diacyl-sn-glycero-3-phospho-(1'-sn-glycerol) = an S-1,2-diacyl-sn-glyceryl-L-cysteinyl-[prolipoprotein] + sn-glycerol 1-phosphate + H(+). Its pathway is protein modification; lipoprotein biosynthesis (diacylglyceryl transfer). In terms of biological role, catalyzes the transfer of the diacylglyceryl group from phosphatidylglycerol to the sulfhydryl group of the N-terminal cysteine of a prolipoprotein, the first step in the formation of mature lipoproteins. The protein is Phosphatidylglycerol--prolipoprotein diacylglyceryl transferase of Azotobacter vinelandii (strain DJ / ATCC BAA-1303).